The following is a 689-amino-acid chain: Histone-lysine N-methyltransferase MEDEA (689 aa).

Disordered regions lie at residues 1 to 20 (MEKE…LNQI), 51 to 73 (HQSF…KSLL), and 169 to 188 (ELSS…EIKK). An interaction with FIE region spans residues 1 to 109 (MEKENHEDDG…DEDQDYALEE (109 aa)). Positions 171 to 184 (SSEEDEEDEEEDEE) are enriched in acidic residues. The region spanning 339–389 (NNTMWTPVEKDLYLKGIEIFGRNSCDVALNILRGLKTCLEIYNYMREQDQC) is the SANT domain. Residues 428 to 532 (RYPPALKKTT…TLGETPVQIQ (105 aa)) form the CXC domain. Residues 544-659 (KKILIGKSDV…EGEELFFDYC (116 aa)) form the SET domain. The disordered stretch occupies residues 666-689 (DWSRGREPRKTGASKRSKEARPAR).

Belongs to the class V-like SAM-binding methyltransferase superfamily. Histone-lysine methyltransferase family. EZ subfamily. In terms of assembly, interacts directly with FIE via its N-terminal domain. These two proteins are probably indirectly associated with FIS2. In plants, PcG complexes are probably composed of a member of the EZ family (CLF or MEA), FIE, and a member of the VEFS family (FIS2, VRN2 or EMF2). Interacts with TAF13. As to expression, expressed in unpollinated siliques that contain maturing gametophytes. Not expressed at early stages of floral development during early megagametogenesis.

The protein resides in the nucleus. The enzyme catalyses L-lysyl(27)-[histone H3] + 3 S-adenosyl-L-methionine = N(6),N(6),N(6)-trimethyl-L-lysyl(27)-[histone H3] + 3 S-adenosyl-L-homocysteine + 3 H(+). In terms of biological role, polycomb group (PcG) protein. Catalytic subunit of some PcG multiprotein complex, which methylates 'Lys-27' of histone H3, leading to transcriptional repression of the affected target genes. Required to prevent the proliferation of the central cell of the female gametophyte by repressing target genes before fertilization. After fertilization, it probably also regulates the embryo and endosperm proliferation and anteroposterior organization during seed development. PcG proteins act by forming multiprotein complexes, which are required to maintain the transcriptionally repressive state of homeotic genes throughout development. PcG proteins are not required to initiate repression, but to maintain it during later stages of development. Interacts with the promoter and repress the transcription of genes such as PHE1 and PHE2, that are paternally active and maternally silenced genes. The sequence is that of Histone-lysine N-methyltransferase MEDEA (MEA) from Arabidopsis thaliana (Mouse-ear cress).